The following is a 455-amino-acid chain: Glutamate-1-semialdehyde 2,1-aminomutase (455 aa).

N6-(pyridoxal phosphate)lysine is present on Lys286.

Belongs to the class-III pyridoxal-phosphate-dependent aminotransferase family. HemL subfamily. As to quaternary structure, homodimer. Pyridoxal 5'-phosphate serves as cofactor.

The protein resides in the cytoplasm. It carries out the reaction (S)-4-amino-5-oxopentanoate = 5-aminolevulinate. Its pathway is porphyrin-containing compound metabolism; protoporphyrin-IX biosynthesis; 5-aminolevulinate from L-glutamyl-tRNA(Glu): step 2/2. The sequence is that of Glutamate-1-semialdehyde 2,1-aminomutase from Clavibacter michiganensis subsp. michiganensis (strain NCPPB 382).